The chain runs to 258 residues: UPF0246 protein MS0374 (258 aa).

Belongs to the UPF0246 family.

The protein is UPF0246 protein MS0374 of Mannheimia succiniciproducens (strain KCTC 0769BP / MBEL55E).